Reading from the N-terminus, the 293-residue chain is Glycine N-methyltransferase (293 aa).

Val2 is modified (N-acetylvaline). (6S)-5-methyl-5,6,7,8-tetrahydrofolate is bound by residues Ser4 and Tyr6. Ser10 is subject to Phosphoserine. Residues Tyr22, Trp31, Tyr34, and Arg41 each coordinate S-adenosyl-L-methionine. A Phosphotyrosine modification is found at Tyr34. At Lys46 the chain carries N6-succinyllysine. Residues Ala65, 86–88, 117–118, 137–140, and Arg176 contribute to the S-adenosyl-L-methionine site; these read DAS, NW, and LGNS. N6-succinyllysine is present on residues Lys191, Lys196, and Lys201. His215 contacts (6S)-5-methyl-5,6,7,8-tetrahydrofolate. S-adenosyl-L-methionine is bound at residue Tyr221. Arg240 contributes to the (6S)-5-methyl-5,6,7,8-tetrahydrofolate binding site.

The protein belongs to the class I-like SAM-binding methyltransferase superfamily. Glycine N-methyltransferase family. As to quaternary structure, homotetramer. In terms of tissue distribution, abundant in liver.

Its subcellular location is the cytoplasm. It carries out the reaction glycine + S-adenosyl-L-methionine = sarcosine + S-adenosyl-L-homocysteine + H(+). Its activity is regulated as follows. Inhibited by 5-methyltetrahydrofolate monoglutamate and by 5-methyltetrahydrofolate pentaglutamate, inhibition is much more effective by the pentaglutamate form than by the monoglutamate form. Two molecules of 5-methyltetrahydrofolate are bound per tetramer. The binding sites are localized between subunits. Inhibitor binding may preclude movements of the polypeptide chain that are necessary for enzyme activity. Functionally, catalyzes the methylation of glycine by using S-adenosylmethionine (AdoMet) to form N-methylglycine (sarcosine) with the concomitant production of S-adenosylhomocysteine (AdoHcy), a reaction regulated by the binding of 5-methyltetrahydrofolate. Possible crucial role in the regulation of tissue concentration of AdoMet and of metabolism of methionine. The protein is Glycine N-methyltransferase (Gnmt) of Rattus norvegicus (Rat).